Here is a 318-residue protein sequence, read N- to C-terminus: UDP-3-O-acylglucosamine N-acyltransferase 1 (318 aa).

H230 acts as the Proton acceptor in catalysis.

Belongs to the transferase hexapeptide repeat family. LpxD subfamily. Homotrimer.

It carries out the reaction a UDP-3-O-[(3R)-3-hydroxyacyl]-alpha-D-glucosamine + a (3R)-hydroxyacyl-[ACP] = a UDP-2-N,3-O-bis[(3R)-3-hydroxyacyl]-alpha-D-glucosamine + holo-[ACP] + H(+). It participates in bacterial outer membrane biogenesis; LPS lipid A biosynthesis. In terms of biological role, catalyzes the N-acylation of UDP-3-O-acylglucosamine using 3-hydroxyacyl-ACP as the acyl donor. Is involved in the biosynthesis of lipid A, a phosphorylated glycolipid that anchors the lipopolysaccharide to the outer membrane of the cell. This Sulfurimonas denitrificans (strain ATCC 33889 / DSM 1251) (Thiomicrospira denitrificans (strain ATCC 33889 / DSM 1251)) protein is UDP-3-O-acylglucosamine N-acyltransferase 1.